A 219-amino-acid polypeptide reads, in one-letter code: Protein-L-isoaspartate O-methyltransferase 2 (219 aa).

Residue serine 66 is part of the active site.

It belongs to the methyltransferase superfamily. L-isoaspartyl/D-aspartyl protein methyltransferase family.

It is found in the cytoplasm. It carries out the reaction [protein]-L-isoaspartate + S-adenosyl-L-methionine = [protein]-L-isoaspartate alpha-methyl ester + S-adenosyl-L-homocysteine. Its function is as follows. Catalyzes the methyl esterification of L-isoaspartyl residues in peptides and proteins that result from spontaneous decomposition of normal L-aspartyl and L-asparaginyl residues. It plays a role in the repair and/or degradation of damaged proteins. This Marinobacter nauticus (strain ATCC 700491 / DSM 11845 / VT8) (Marinobacter aquaeolei) protein is Protein-L-isoaspartate O-methyltransferase 2.